A 748-amino-acid chain; its full sequence is MSFIDPYQHIIVEHQYSHKFTVVVLRATKVTKGTFGDMLDTPDPYVELFISTTPDSRKRTRHFNNDINPVWNETFEFILDPNQENVLEITLMDANYVMDETLGTATFPVSSMKVGEKKEVPFIFNQVTEMILEMSLEVCSCPDLRFSMALCDQEKTFRQQRKENIKENMKKLLGPKKSEGLYSTRDVPVVAILGSGGGFRAMVGFSGVMKALYESGILDCATYIAGLSGSTWYMSTLYSHPDFPEKGPEEINEELMKNVSHNPLLLLTPQKVKRYVESLWKKKSSGQPVTFTDIFGMLIGETLIQNRMSMTLSSLKEKVNAARCPLPLFTCLHVKPDVSELMFADWVEFSPYEIGMAKYGTFMAPDLFGSKFFMGTVVKKYEENPLHFLMGVWGSAFSILFNRVLGVSGSQNKGSTMEEELENITAKHIVSNDSSDSDDEAQGPKGTENEEAEKEYQSDNQASWVHRMLMALVSDSALFNTREGRAGKVHNFMLGLNLNTSYPLSPLRDFSSQDSFDDELDAAVADPDEFERIYEPLDVKSKKIHVVDSGLTFNLPYPLILRPQRGVDLIISFDFSARPSDTSPPFKELLLAEKWAKMNKLPFPKIDPYVFDREGLKECYVFKPKNPDVEKDCPTIIHFVLANINFRKYKAPGVLRETKEEKEIADFDIFDDPESPFSTFNFQYPNQAFKRLHDLMYFNTLNNIDVIKDAIVESIEYRRQNPSRCSVSLSNVEARKFFNKEFLSKPTV.

The phospholipid binding stretch occupies residues 1–178 (MSFIDPYQHI…MKKLLGPKKS (178 aa)). Ser-2 is subject to Phosphoserine. Positions 6 to 122 (PYQHIIVEHQ…KVGEKKEVPF (117 aa)) constitute a C2 domain. Positions 40, 41, 43, 65, 93, 94, and 95 each coordinate Ca(2+). The region spanning 140-739 (SCPDLRFSMA…SNVEARKFFN (600 aa)) is the PLA2c domain. The active-site Nucleophile is Ser-228. Position 268 is a phosphothreonine (Thr-268). The segment at 427-458 (KHIVSNDSSDSDDEAQGPKGTENEEAEKEYQS) is disordered. Phosphoserine is present on residues Ser-434, Ser-435, and Ser-437. Phosphoserine; by MAPK is present on Ser-505. Position 515 is a phosphoserine (Ser-515). Lys-540 participates in a covalent cross-link: Glycyl lysine isopeptide (Lys-Gly) (interchain with G-Cter in SUMO2). The active-site Proton acceptor is the Asp-548. Lys-605 participates in a covalent cross-link: Glycyl lysine isopeptide (Lys-Gly) (interchain with G-Cter in SUMO2). Phosphoserine is present on residues Ser-726 and Ser-728.

As to quaternary structure, interacts with KAT5. Phosphorylated at both Ser-505 and Ser-726 in response to mitogenic stimuli. Expressed in various organs including uterus, kidney, spleen, liver, heart, lung and brain (at protein level).

It is found in the cytoplasm. The protein resides in the golgi apparatus membrane. The protein localises to the nucleus envelope. The enzyme catalyses a 1,2-diacyl-sn-glycero-3-phosphocholine + H2O = a 1-acyl-sn-glycero-3-phosphocholine + a fatty acid + H(+). The catalysed reaction is a 1-O-alkyl-2-acyl-sn-glycero-3-phosphocholine + H2O = a 1-O-alkyl-sn-glycero-3-phosphocholine + a fatty acid + H(+). It catalyses the reaction a 1-acyl-sn-glycero-3-phosphocholine + H2O = sn-glycerol 3-phosphocholine + a fatty acid + H(+). It carries out the reaction 1-hexadecanoyl-2-(5Z,8Z,11Z,14Z-eicosatetraenoyl)-sn-glycero-3-phosphocholine + H2O = 1-hexadecanoyl-sn-glycero-3-phosphocholine + (5Z,8Z,11Z,14Z)-eicosatetraenoate + H(+). The enzyme catalyses 1,2-di-(5Z,8Z,11Z,14Z-eicosatetraenoyl)-sn-glycero-3-phosphocholine + H2O = 1-(5Z,8Z,11Z,14Z-eicosatetraenoyl)-sn-glycero-3-phosphocholine + (5Z,8Z,11Z,14Z)-eicosatetraenoate + H(+). The catalysed reaction is 1-octadecanoyl-2-(5Z,8Z,11Z,14Z-eicosatetraenoyl)-sn-glycero-3-phosphocholine + H2O = 1-octadecanoyl-sn-glycero-3-phosphocholine + (5Z,8Z,11Z,14Z)-eicosatetraenoate + H(+). It catalyses the reaction 1-hexadecanoyl-2-(9Z,12Z-octadecadienoyl)-sn-glycero-3-phosphocholine + H2O = (9Z,12Z)-octadecadienoate + 1-hexadecanoyl-sn-glycero-3-phosphocholine + H(+). It carries out the reaction 1-octadecanoyl-2-(9Z,12Z,15Z-octadecatrienoyl)-sn-glycero-3-phosphocholine + H2O = (9Z,12Z,15Z)-octadecatrienoate + 1-octadecanoyl-sn-glycero-3-phosphocholine + H(+). The enzyme catalyses 1-(5Z,8Z,11Z,14Z-eicosatetraenoyl)-2-hexadecanoyl-sn-glycero-3-phosphocholine + H2O = 1-(5Z,8Z,11Z,14Z-eicosatetraenoyl)-sn-glycero-3-phosphocholine + hexadecanoate + H(+). The catalysed reaction is 1-O-hexadecyl-2-(5Z,8Z,11Z,14Z)-eicosatetraenoyl-sn-glycero-3-phosphocholine + H2O = 1-O-hexadecyl-sn-glycero-3-phosphocholine + (5Z,8Z,11Z,14Z)-eicosatetraenoate + H(+). It catalyses the reaction 1,2-di-(9Z-octadecenoyl)-sn-glycero-3-phospho-(1'-sn-glycerol) + H2O = 1-(9Z-octadecenoyl)-sn-glycero-3-phospho-(1'-sn-glycerol) + (9Z)-octadecenoate + H(+). It carries out the reaction 1-octadecanoyl-2-(5Z,8Z,11Z,14Z-eicosatetraenoyl)-sn-glycero-3-phosphate + H2O = 1-octadecanoyl-sn-glycero-3-phosphate + (5Z,8Z,11Z,14Z)-eicosatetraenoate + H(+). The enzyme catalyses 1-hexadecanoyl-sn-glycero-3-phosphocholine + H2O = sn-glycerol 3-phosphocholine + hexadecanoate + H(+). The catalysed reaction is 2-(prostaglandin E2)-sn-glycero-3-phosphoethanolamine + H2O = sn-glycero-3-phosphoethanolamine + prostaglandin E2 + H(+). It catalyses the reaction 2-[(15S)-hydroxy-(5Z,8Z,11Z,13E)-eicosatetraenoyl]-sn-glycero-3-phosphocholine + H2O = (15S)-hydroxy-(5Z,8Z,11Z,13E)-eicosatetraenoate + sn-glycerol 3-phosphocholine + H(+). It carries out the reaction 2-[(15R)-hydroxy-(5Z,8Z,11Z,13E)-eicosatetraenoyl]-sn-glycero-3-phosphocholine + H2O = (15R)-hydroxy-(5Z,8Z,11Z,13E)-eicosatetraenoate + sn-glycerol 3-phosphocholine + H(+). The enzyme catalyses 2-(prostaglandin E2)-sn-glycero-3-phosphocholine + H2O = prostaglandin E2 + sn-glycerol 3-phosphocholine + H(+). The catalysed reaction is 2-[(11R)-hydroxy-(5Z,8Z,12E,14Z)-eicosatetraenoyl]-sn-glycero-3-phosphocholine + H2O = (11R)-hydroxy-(5Z,8Z,12E,14Z)-eicosatetraenoate + sn-glycerol 3-phosphocholine + H(+). It catalyses the reaction 1-(5Z,8Z,11Z,14Z-eicosatetraenoyl)-2-O-hexadecyl-sn-glycero-3-phosphocholine + H2O = 2-O-hexadecyl-sn-glycero-3-phosphocholine + (5Z,8Z,11Z,14Z)-eicosatetraenoate + H(+). It carries out the reaction 1-octadecanoyl-2-(5Z,8Z,11Z,14Z-eicosatetraenoyl)-sn-glycero-3-phosphocholine + glycerol = 1-(5Z,8Z,11Z,14Z-eicosatetraenoyl)-glycerol + 1-octadecanoyl-sn-glycero-3-phosphocholine. The enzyme catalyses 1-octadecanoyl-2-(9Z,12Z,15Z-octadecatrienoyl)-sn-glycero-3-phosphocholine + glycerol = 1-(9Z,12Z,15Z-octadecatrienoyl)-glycerol + 1-octadecanoyl-sn-glycero-3-phosphocholine. It functions in the pathway membrane lipid metabolism; glycerophospholipid metabolism. It participates in lipid metabolism; arachidonate metabolism. Its pathway is lipid metabolism; prostaglandin biosynthesis. The protein operates within lipid metabolism; leukotriene B4 biosynthesis. Activated by cytosolic calcium, which is necessary for binding to membrane lipids. Activated by phosphorylation in response to mitogenic stimuli. Stimulated by agonists such as ATP and thrombin. Its function is as follows. Has primarily calcium-dependent phospholipase and lysophospholipase activities, with a major role in membrane lipid remodeling and biosynthesis of lipid mediators of the inflammatory response. Plays an important role in embryo implantation and parturition through its ability to trigger prostanoid production. Preferentially hydrolyzes the ester bond of the fatty acyl group attached at sn-2 position of phospholipids (phospholipase A2 activity). Selectively hydrolyzes sn-2 arachidonoyl group from membrane phospholipids, providing the precursor for eicosanoid biosynthesis via the cyclooxygenase pathway. In an alternative pathway of eicosanoid biosynthesis, hydrolyzes sn-2 fatty acyl chain of eicosanoid lysophopholipids to release free bioactive eicosanoids. Hydrolyzes the ester bond of the fatty acyl group attached at sn-1 position of phospholipids (phospholipase A1 activity) only if an ether linkage rather than an ester linkage is present at the sn-2 position. This hydrolysis is not stereospecific. Has calcium-independent phospholipase A2 and lysophospholipase activities in the presence of phosphoinositides. Has O-acyltransferase activity. Catalyzes the transfer of fatty acyl chains from phospholipids to a primary hydroxyl group of glycerol (sn-1 or sn-3), potentially contributing to monoacylglycerol synthesis. In Mus musculus (Mouse), this protein is Cytosolic phospholipase A2 (Pla2g4a).